A 379-amino-acid chain; its full sequence is ATP phosphoribosyltransferase regulatory subunit (379 aa).

This sequence belongs to the class-II aminoacyl-tRNA synthetase family. HisZ subfamily. In terms of assembly, heteromultimer composed of HisG and HisZ subunits.

The protein localises to the cytoplasm. Its pathway is amino-acid biosynthesis; L-histidine biosynthesis; L-histidine from 5-phospho-alpha-D-ribose 1-diphosphate: step 1/9. Functionally, required for the first step of histidine biosynthesis. May allow the feedback regulation of ATP phosphoribosyltransferase activity by histidine. The protein is ATP phosphoribosyltransferase regulatory subunit of Sinorhizobium fredii (strain NBRC 101917 / NGR234).